Consider the following 328-residue polypeptide: Extracellular exo-alpha-(1-&gt;5)-L-arabinofuranosidase (328 aa).

The tat-tyPE signal signal peptide spans 1-43 (MCTREAVRMSREHDLPEIPSRRLLLKGAAAAGALTAVPGVAHA). Catalysis depends on Asp-60, which acts as the Proton acceptor. Glu-236 functions as the Proton donor in the catalytic mechanism.

The protein belongs to the glycosyl hydrolase 43 family. Post-translationally, predicted to be exported by the Tat system. The position of the signal peptide cleavage has been experimentally proven.

It is found in the secreted. The enzyme catalyses Hydrolysis of terminal non-reducing alpha-L-arabinofuranoside residues in alpha-L-arabinosides.. It functions in the pathway glycan metabolism; L-arabinan degradation. In terms of biological role, involved in the degradation of arabinan and is a key enzyme in the complete degradation of the plant cell wall. Catalyzes only the cleavage of terminal alpha-(1-&gt;5) arabinofuranosyl bonds of arabinan present in the arabinofuranosyl polysaccharides or oligosaccharides. It cannot act on other arabinose-containing polysaccharides and arabinoxylo-oligosaccharides. This chain is Extracellular exo-alpha-(1-&gt;5)-L-arabinofuranosidase, found in Streptomyces chartreusis.